The following is a 167-amino-acid chain: MNSNEIKAILEKIKKKLTNQVNKIKNIFIYIIYLKEYLNQLYEKKYFYREINDENYWKKYSNIEIYINGKKIGTSENINKSEYILLDLFMNGPIKININKKDKIYEITNIRKLRYLMLLYLGIVSKINIVFQQITPPTLNYEKNYKTEEIVDNYFVLHVYVWNEIKK.

It belongs to the A.longa ORF167/ORF288 family.

It localises to the plastid. This is an uncharacterized protein from Euglena longa (Euglenophycean alga).